Here is a 265-residue protein sequence, read N- to C-terminus: Type III pantothenate kinase (265 aa).

ATP is bound at residue 9 to 16 (DAGNSRIK). Substrate contacts are provided by residues Tyr96 and 103-106 (GSDR). Asp105 serves as the catalytic Proton acceptor. Thr129 serves as a coordination point for ATP. Substrate is bound at residue Thr189.

The protein belongs to the type III pantothenate kinase family. As to quaternary structure, homodimer. It depends on NH4(+) as a cofactor. K(+) is required as a cofactor.

The protein localises to the cytoplasm. It catalyses the reaction (R)-pantothenate + ATP = (R)-4'-phosphopantothenate + ADP + H(+). It participates in cofactor biosynthesis; coenzyme A biosynthesis; CoA from (R)-pantothenate: step 1/5. Functionally, catalyzes the phosphorylation of pantothenate (Pan), the first step in CoA biosynthesis. The sequence is that of Type III pantothenate kinase from Burkholderia orbicola (strain AU 1054).